The chain runs to 637 residues: Chaperone protein HtpG (637 aa).

Positions 1–348 (MAEAGQMEKH…SNDLPLNVSR (348 aa)) are a; substrate-binding. The tract at residues 349–565 (EILQDNKITR…DNDMSTQMAK (217 aa)) is b. Residues 566-637 (LMEAAGQAVP…TRLNKLMLNA (72 aa)) form a c region.

It belongs to the heat shock protein 90 family. Homodimer.

The protein resides in the cytoplasm. Molecular chaperone. Has ATPase activity. The chain is Chaperone protein HtpG from Idiomarina loihiensis (strain ATCC BAA-735 / DSM 15497 / L2-TR).